The chain runs to 216 residues: ATP-dependent Clp protease proteolytic subunit (216 aa).

The active-site Nucleophile is the S101. Residue H126 is part of the active site.

Belongs to the peptidase S14 family. In terms of assembly, component of the chloroplastic Clp protease core complex.

It localises to the plastid. The protein resides in the chloroplast stroma. The catalysed reaction is Hydrolysis of proteins to small peptides in the presence of ATP and magnesium. alpha-casein is the usual test substrate. In the absence of ATP, only oligopeptides shorter than five residues are hydrolyzed (such as succinyl-Leu-Tyr-|-NHMec, and Leu-Tyr-Leu-|-Tyr-Trp, in which cleavage of the -Tyr-|-Leu- and -Tyr-|-Trp bonds also occurs).. Its function is as follows. Cleaves peptides in various proteins in a process that requires ATP hydrolysis. Has a chymotrypsin-like activity. Plays a major role in the degradation of misfolded proteins. The protein is ATP-dependent Clp protease proteolytic subunit of Saccharum hybrid (Sugarcane).